The primary structure comprises 133 residues: Succinate dehydrogenase assembly factor 3, mitochondrial (133 aa).

A mitochondrion-targeting transit peptide spans 1 to 12 (MNNKLIYRSVRF).

It belongs to the complex I LYR family. SDHAF3 subfamily. Interacts with SDH2 within an SDH1-SDH2 subcomplex.

It localises to the mitochondrion. It is found in the mitochondrion intermembrane space. Its subcellular location is the mitochondrion matrix. Plays an essential role in the assembly of succinate dehydrogenase (SDH), an enzyme complex (also referred to as respiratory complex II) that is a component of both the tricarboxylic acid (TCA) cycle and the mitochondrial electron transport chain, and which couples the oxidation of succinate to fumarate with the reduction of ubiquinone (coenzyme Q) to ubiquinol. Promotes maturation of the iron-sulfur protein subunit SDH2 of the SDH catalytic dimer, protecting it from the deleterious effects of oxidants. Acts together with SDHAF1 (SDH6). This is Succinate dehydrogenase assembly factor 3, mitochondrial from Saccharomyces cerevisiae (strain ATCC 204508 / S288c) (Baker's yeast).